The sequence spans 341 residues: Protein-glutamate methylesterase/protein-glutamine glutaminase 1 (341 aa).

Residues 2–119 (KVGIVNDSAL…SDAKLTAGPL (118 aa)) form the Response regulatory domain. Asp53 bears the 4-aspartylphosphate mark. The 186-residue stretch at 146 to 331 (TLAASRLVAI…LTAIAPRLVQ (186 aa)) folds into the CheB-type methylesterase domain. Active-site residues include Ser158, His185, and Asp278.

It belongs to the CheB family. Phosphorylated by CheA. Phosphorylation of the N-terminal regulatory domain activates the methylesterase activity.

It localises to the cytoplasm. It carries out the reaction [protein]-L-glutamate 5-O-methyl ester + H2O = L-glutamyl-[protein] + methanol + H(+). It catalyses the reaction L-glutaminyl-[protein] + H2O = L-glutamyl-[protein] + NH4(+). In terms of biological role, involved in chemotaxis. Part of a chemotaxis signal transduction system that modulates chemotaxis in response to various stimuli. Catalyzes the demethylation of specific methylglutamate residues introduced into the chemoreceptors (methyl-accepting chemotaxis proteins or MCP) by CheR. Also mediates the irreversible deamidation of specific glutamine residues to glutamic acid. The chain is Protein-glutamate methylesterase/protein-glutamine glutaminase 1 from Cupriavidus pinatubonensis (strain JMP 134 / LMG 1197) (Cupriavidus necator (strain JMP 134)).